Reading from the N-terminus, the 409-residue chain is Cdc42 effector protein 1 (409 aa).

Residues 1-29 (MPGPQGGTGAPTMSLGKLSPVGWVSSSHG) are disordered. Phosphoserine is present on residues serine 19 and serine 27. Threonine 34 is subject to Phosphothreonine. A CRIB domain is found at 38–52 (ISPPLGDFRHTMHVG). Serine 39 carries the post-translational modification Phosphoserine. Omega-N-methylarginine is present on arginine 53. Serine 65, serine 77, serine 101, serine 113, serine 121, and serine 139 each carry phosphoserine. Basic and acidic residues predominate over residues 167–189 (PRVEKHSNRDRDRDPDHSQDREQ). Positions 167 to 203 (PRVEKHSNRDRDRDPDHSQDREQSSFPSEPTPNPELR) are disordered. Serine 191, serine 205, serine 207, and serine 210 each carry phosphoserine. Repeat copies occupy residues 235-241 (PAAETPV), 242-248 (PTANPPA), and 255-261 (PTAKPPA). The interval 235 to 284 (PAAETPVPTANPPAPAANPAPTAKPPAHAITTLDAVTSLPASAVTSLPAP) is 3 X 7 AA tandem repeats of [PT]-[AT]-A-[ENT]-[PT]-[PTS]-[AG]. 2 disordered regions span residues 237–260 (AETPVPTANPPAPAANPAPTAKPP) and 282–329 (PAPA…FDRH). Residues 243–258 (TANPPAPAANPAPTAK) show a composition bias toward pro residues. The segment covering 282 to 291 (PAPAAASSPS) has biased composition (low complexity). Phosphoserine is present on residues serine 312, serine 332, serine 368, and serine 371.

It belongs to the BORG/CEP family. As to quaternary structure, interacts with RHOQ and CDC42, in a GTP-dependent manner.

Its subcellular location is the endomembrane system. It is found in the cytoplasm. The protein resides in the cytoskeleton. Functionally, probably involved in the organization of the actin cytoskeleton. Induced membrane extensions in fibroblasts. This is Cdc42 effector protein 1 (Cdc42ep1) from Mus musculus (Mouse).